Reading from the N-terminus, the 353-residue chain is Uroporphyrinogen decarboxylase (353 aa).

Substrate is bound by residues Arg30–Arg34, Asp79, Tyr154, Ser209, and His332.

It belongs to the uroporphyrinogen decarboxylase family. In terms of assembly, homodimer.

Its subcellular location is the cytoplasm. It carries out the reaction uroporphyrinogen III + 4 H(+) = coproporphyrinogen III + 4 CO2. The protein operates within porphyrin-containing compound metabolism; protoporphyrin-IX biosynthesis; coproporphyrinogen-III from 5-aminolevulinate: step 4/4. In terms of biological role, catalyzes the decarboxylation of four acetate groups of uroporphyrinogen-III to yield coproporphyrinogen-III. This Mycobacterium marinum (strain ATCC BAA-535 / M) protein is Uroporphyrinogen decarboxylase.